Here is a 196-residue protein sequence, read N- to C-terminus: Orotate phosphoribosyltransferase (196 aa).

Position 117–125 (glutamate 117–serine 125) interacts with 5-phospho-alpha-D-ribose 1-diphosphate. Orotate contacts are provided by threonine 121 and arginine 149.

It belongs to the purine/pyrimidine phosphoribosyltransferase family. PyrE subfamily. In terms of assembly, homodimer. Mg(2+) is required as a cofactor.

It carries out the reaction orotidine 5'-phosphate + diphosphate = orotate + 5-phospho-alpha-D-ribose 1-diphosphate. Its pathway is pyrimidine metabolism; UMP biosynthesis via de novo pathway; UMP from orotate: step 1/2. Its function is as follows. Catalyzes the transfer of a ribosyl phosphate group from 5-phosphoribose 1-diphosphate to orotate, leading to the formation of orotidine monophosphate (OMP). This is Orotate phosphoribosyltransferase from Methylorubrum populi (strain ATCC BAA-705 / NCIMB 13946 / BJ001) (Methylobacterium populi).